The sequence spans 272 residues: tRNA (guanine-N(7)-)-methyltransferase (272 aa).

The span at 1–20 shows a compositional bias: basic and acidic residues; sequence MSTDSESKRRAYREEKEGAR. The interval 1-43 is disordered; the sequence is MSTDSESKRRAYREEKEGARKKSVKLAPEATPESKPDLPRKRY. S-adenosyl-L-methionine contacts are provided by residues glycine 89, 112–113, 148–149, and cysteine 168; these read EI and NA. The active site involves aspartate 171. 246-248 is a binding site for S-adenosyl-L-methionine; it reads TEE.

It belongs to the class I-like SAM-binding methyltransferase superfamily. TrmB family. In terms of assembly, forms a complex with TRM82.

Its subcellular location is the nucleus. It catalyses the reaction guanosine(46) in tRNA + S-adenosyl-L-methionine = N(7)-methylguanosine(46) in tRNA + S-adenosyl-L-homocysteine. Its pathway is tRNA modification; N(7)-methylguanine-tRNA biosynthesis. In terms of biological role, catalyzes the formation of N(7)-methylguanine at position 46 (m7G46) in tRNA. The protein is tRNA (guanine-N(7)-)-methyltransferase of Meyerozyma guilliermondii (strain ATCC 6260 / CBS 566 / DSM 6381 / JCM 1539 / NBRC 10279 / NRRL Y-324) (Yeast).